The sequence spans 210 residues: Calaxin (210 aa).

EF-hand domains lie at 64–99 (TDDM…FLRG), 100–135 (TLDE…SLIR), and 145–180 (GIKD…ENLL). The Ca(2+) site is built by Asp-77, Asp-79, Asp-81, Tyr-83, Glu-88, Asp-113, Asn-115, Asp-117, Tyr-119, Glu-124, Asp-158, Asp-160, Asp-162, Arg-164, and Asp-169.

Component of the outer dynein arm-docking complex along with ODAD1, ODAD2, ODAD3 and ODAD4.

The protein resides in the cytoplasm. It is found in the cytoskeleton. It localises to the cilium axoneme. Its subcellular location is the cell projection. The protein localises to the cilium. The protein resides in the flagellum. In terms of biological role, component of the outer dynein arm-docking complex (ODA-DC) that mediates outer dynein arms (ODA) binding onto the doublet microtubule. Seems to regulate the assembly of both ODAs and their axonemal docking complex onto ciliary microtubules. Regulates ciliary and flagellar motility and is required for cilia-driven determination of body laterality. Functionally, regulates ciliary motility and is required for cilia-driven determination of body laterality. This Danio rerio (Zebrafish) protein is Calaxin (clxn).